The primary structure comprises 293 residues: Small ribosomal subunit protein uS5 (293 aa).

The segment at 1–56 (MADDAGAAGGPGGPGGPGMGNRGGFRGGFGSGIRGRGRGRGRGRGRGRGARGGKAE) is disordered. Ala-2 is modified (N-acetylalanine). A compositionally biased stretch (gly residues) spans 7 to 34 (AAGGPGGPGGPGMGNRGGFRGGFGSGIR). Positions 35–51 (GRGRGRGRGRGRGRGAR) are enriched in basic residues. Glycyl lysine isopeptide (Lys-Gly) (interchain with G-Cter in ubiquitin) cross-links involve residues Lys-54 and Lys-58. Residues 102–165 (LKDEVLKIMP…ILAKLSIVPV (64 aa)) enclose the S5 DRBM domain. Thr-252 carries the post-translational modification Phosphothreonine. Residue Lys-263 is modified to N6-acetyllysine. Ser-264 carries the phosphoserine modification. Residue Thr-270 is modified to Phosphothreonine. Lys-275 carries the N6-acetyllysine; alternate modification. Lys-275 participates in a covalent cross-link: Glycyl lysine isopeptide (Lys-Gly) (interchain with G-Cter in SUMO1); alternate. Lys-275 is covalently cross-linked (Glycyl lysine isopeptide (Lys-Gly) (interchain with G-Cter in SUMO2); alternate). Lys-275 participates in a covalent cross-link: Glycyl lysine isopeptide (Lys-Gly) (interchain with G-Cter in ubiquitin); alternate. Position 281 is a phosphoserine (Ser-281).

It belongs to the universal ribosomal protein uS5 family. In terms of assembly, component of the small ribosomal subunit. Interacts with zinc finger protein ZNF277 (via zinc-finger domains); the interaction is direct; the interaction is extra-ribosomal. Interaction with ZNF277 competes with the binding of RPS2 to protein arginine methyltransferase PRMT3. In terms of processing, citrullinated by PADI4 in the Arg/Gly-rich region. Post-translationally, asymmetric arginine dimethylation by PRMT3 occurs at multiple sites in the Arg/Gly-rich region. Monoubiquitinated at Lys-54 and Lys-58 by RNF10 when a ribosome has stalled during translation, leading to its degradation by the proteasome. Deubiquitinated at Lys-54 and Lys-58 by USP10, preventing degradation by the proteasome and promoting 40S ribosome subunit recycling following ribosome dissociation.

It localises to the cytoplasm. The protein resides in the nucleus. Its subcellular location is the nucleolus. Its function is as follows. Component of the ribosome, a large ribonucleoprotein complex responsible for the synthesis of proteins in the cell. The small ribosomal subunit (SSU) binds messenger RNAs (mRNAs) and translates the encoded message by selecting cognate aminoacyl-transfer RNA (tRNA) molecules. The large subunit (LSU) contains the ribosomal catalytic site termed the peptidyl transferase center (PTC), which catalyzes the formation of peptide bonds, thereby polymerizing the amino acids delivered by tRNAs into a polypeptide chain. The nascent polypeptides leave the ribosome through a tunnel in the LSU and interact with protein factors that function in enzymatic processing, targeting, and the membrane insertion of nascent chains at the exit of the ribosomal tunnel. Plays a role in the assembly and function of the 40S ribosomal subunit. Mutations in this protein affects the control of translational fidelity. Involved in nucleolar processing of pre-18S ribosomal RNA and ribosome assembly. The polypeptide is Small ribosomal subunit protein uS5 (RPS2) (Homo sapiens (Human)).